The following is a 1278-amino-acid chain: NPC intracellular cholesterol transporter 1 (1278 aa).

The first 22 residues, 1–22, serve as a signal peptide directing secretion; sequence MTARGLALGLLLLLLCPAQVFS. At 23–261 the chain is on the lumenal side; that stretch reads QSCVWYGECG…QPPPPPAPWT (239 aa). Disulfide bonds link cysteine 25–cysteine 74, cysteine 31–cysteine 42, cysteine 63–cysteine 109, cysteine 75–cysteine 113, cysteine 97–cysteine 238, cysteine 100–cysteine 160, cysteine 177–cysteine 184, cysteine 227–cysteine 243, and cysteine 240–cysteine 247. Asparagine 41 lines the cholesterol pocket. The N-linked (GlcNAc...) asparagine glycan is linked to asparagine 70. Residue glutamine 79 participates in cholesterol binding. Asparagine 122 and asparagine 135 each carry an N-linked (GlcNAc...) asparagine glycan. Residue asparagine 158 is glycosylated (N-linked (GlcNAc...) asparagine; atypical). Residues 175 to 205 are important for cholesterol binding and cholesterol transfer from NPC1 to liposomes; it reads LLCGKDADACNATNWIEYMFNKDNGQAPFTI. N-linked (GlcNAc...) asparagine glycans are attached at residues asparagine 185 and asparagine 222. Residues 262–282 traverse the membrane as a helical segment; it reads ILGLDAMYVIMWITYMAFLLV. At 283–350 the chain is on the cytoplasmic side; the sequence is FFGAFFAVWC…RWGSFCVRNP (68 aa). The chain crosses the membrane as a helical span at residues 351 to 371; sequence GCVIFFSLVFITACSSGLVFV. The Lumenal portion of the chain corresponds to 372 to 620; sequence RVTTNPVDLW…DELNRESDSD (249 aa). Residues asparagine 452, asparagine 459, asparagine 478, asparagine 524, asparagine 557, asparagine 572, and asparagine 598 are each glycosylated (N-linked (GlcNAc...) asparagine). 2 disulfide bridges follow: cysteine 468–cysteine 479 and cysteine 516–cysteine 533. One can recognise an SSD domain in the interval 620–785; it reads DVFTVVISYA…ITCFVSLLGL (166 aa). Residues 621–641 form a helical membrane-spanning segment; the sequence is VFTVVISYAIMFLYISLALGH. At 642–653 the chain is on the cytoplasmic side; it reads MKSCRRLLVDSK. A helical transmembrane segment spans residues 654–675; sequence VSLGIAGILIVLSSVACSLGVF. The Lumenal segment spans residues 676 to 685; it reads SYIGLPLTLI. Residues 686-706 form a helical membrane-spanning segment; the sequence is VIEVIPFLVLAVGVDNIFILV. Residues 707 to 730 are Cytoplasmic-facing; sequence QAYQRDERLQGETLDQQLGRVLGE. A helical membrane pass occupies residues 731 to 751; that stretch reads VAPSMFLSSFSETVAFFLGAL. The Lumenal portion of the chain corresponds to 752 to 759; the sequence is SVMPAVHT. A helical membrane pass occupies residues 760–783; it reads FSLFAGLAVFIDFLLQITCFVSLL. Topologically, residues 784 to 832 are cytoplasmic; that stretch reads GLDIKRQEKNRLDIFCCVRGAEDGTSVQASESCLFRFFKNSYSPLLLKD. The helical transmembrane segment at 833–853 threads the bilayer; the sequence is WMRPIVIAIFVGVLSFSIAVL. The Lumenal segment spans residues 854–1097; it reads NKVDIGLDQS…YEQYLTIIDD (244 aa). Cysteines 909 and 914 form a disulfide. Residues asparagine 916, asparagine 931, asparagine 961, asparagine 968, asparagine 1064, and asparagine 1072 are each glycosylated (N-linked (GlcNAc...) asparagine). 3 cysteine pairs are disulfide-bonded: cysteine 956/cysteine 1011, cysteine 957/cysteine 979, and cysteine 967/cysteine 976. The chain crosses the membrane as a helical span at residues 1098-1118; the sequence is TIFNLGVSLGAIFLVTMVLLG. Residues 1119-1124 lie on the Cytoplasmic side of the membrane; the sequence is CELWSA. A helical transmembrane segment spans residues 1125–1145; it reads VIMCATIAMVLVNMFGVMWLW. Residues 1146–1150 lie on the Lumenal side of the membrane; sequence GISLN. A helical transmembrane segment spans residues 1151 to 1171; that stretch reads AVSLVNLVMSCGISVEFCSHI. The Cytoplasmic portion of the chain corresponds to 1172 to 1194; that stretch reads TRAFTVSMKGSRVERAEEALAHM. A helical membrane pass occupies residues 1195–1215; the sequence is GSSVFSGITLTKFGGIVVLAF. The Lumenal segment spans residues 1216-1223; sequence AKSQIFQI. A helical membrane pass occupies residues 1224–1244; sequence FYFRMYLAMVLLGATHGLIFL. Residues 1245-1278 are Cytoplasmic-facing; it reads PVLLSYIGPSVNKAKSCATEERYKGTERERLLNF. The required for location in lysosomes stretch occupies residues 1275–1278; sequence LLNF. A Di-leucine motif motif is present at residues 1275–1278; sequence LLNF.

This sequence belongs to the patched family. Interacts (via the second lumenal domain) with NPC2. Interacts with TMEM97; the interaction may decrease NPC1 availability to the cell. Interacts with TIM1. Interacts with SLC38A9; this interaction inhibits cholesterol-mediated mTORC1 activation via its sterol transport activity. In terms of assembly, (Microbial infection) Interacts with ebolavirus glycoprotein. N-glycosylated.

The protein localises to the late endosome membrane. It localises to the lysosome membrane. The enzyme catalyses cholesterol(in) = cholesterol(out). In terms of biological role, intracellular cholesterol transporter which acts in concert with NPC2 and plays an important role in the egress of cholesterol from the endosomal/lysosomal compartment. Unesterified cholesterol that has been released from LDLs in the lumen of the late endosomes/lysosomes is transferred by NPC2 to the cholesterol-binding pocket in the N-terminal domain of NPC1. Cholesterol binds to NPC1 with the hydroxyl group buried in the binding pocket. Binds oxysterol with higher affinity than cholesterol. May play a role in vesicular trafficking in glia, a process that may be crucial for maintaining the structural and functional integrity of nerve terminals. Inhibits cholesterol-mediated mTORC1 activation throught its interaction with SLC38A9. Its function is as follows. (Microbial infection) Acts as an endosomal entry receptor for ebolavirus. This Homo sapiens (Human) protein is NPC intracellular cholesterol transporter 1.